The sequence spans 151 residues: Ribosomal RNA large subunit methyltransferase H (151 aa).

Residues Gly100 and Leu119–Phe124 each bind S-adenosyl-L-methionine.

Belongs to the RNA methyltransferase RlmH family. Homodimer.

It localises to the cytoplasm. It catalyses the reaction pseudouridine(1915) in 23S rRNA + S-adenosyl-L-methionine = N(3)-methylpseudouridine(1915) in 23S rRNA + S-adenosyl-L-homocysteine + H(+). Specifically methylates the pseudouridine at position 1915 (m3Psi1915) in 23S rRNA. The chain is Ribosomal RNA large subunit methyltransferase H from Thermotoga maritima (strain ATCC 43589 / DSM 3109 / JCM 10099 / NBRC 100826 / MSB8).